We begin with the raw amino-acid sequence, 326 residues long: Glyoxylate/hydroxypyruvate reductase B (326 aa).

Catalysis depends on residues Arg-237 and Glu-266. The Proton donor role is filled by His-285.

Belongs to the D-isomer specific 2-hydroxyacid dehydrogenase family. GhrB subfamily. Homodimer.

It is found in the cytoplasm. It carries out the reaction glycolate + NADP(+) = glyoxylate + NADPH + H(+). The enzyme catalyses (R)-glycerate + NAD(+) = 3-hydroxypyruvate + NADH + H(+). The catalysed reaction is (R)-glycerate + NADP(+) = 3-hydroxypyruvate + NADPH + H(+). Functionally, catalyzes the NADPH-dependent reduction of glyoxylate and hydroxypyruvate into glycolate and glycerate, respectively. The polypeptide is Glyoxylate/hydroxypyruvate reductase B (Yersinia pseudotuberculosis serotype O:1b (strain IP 31758)).